Reading from the N-terminus, the 779-residue chain is Acyl-homoserine lactone acylase PvdQ (779 aa).

An N-terminal signal peptide occupies residues Met1–Ala25. The propeptide at Ser202–Gly223 is spacer peptide. Ser224 serves as the catalytic Nucleophile. Residues Glu731–Ala746 are compositionally biased toward polar residues. Positions Glu731–Trp752 are disordered.

Belongs to the peptidase S45 family. As to quaternary structure, heterodimer of an alpha subunit and a beta subunit processed from the same precursor.

It localises to the periplasm. It carries out the reaction an N-acyl-L-homoserine lactone + H2O = L-homoserine lactone + a carboxylate. In terms of biological role, catalyzes the deacylation of acyl-homoserine lactone (AHL or acyl-HSL), releasing homoserine lactone (HSL) and the corresponding fatty acid. Possesses a specificity for the degradation of long-chain acyl-HSLs (side chains of 11 to 14 carbons in length). The sequence is that of Acyl-homoserine lactone acylase PvdQ (pvdQ) from Pseudomonas savastanoi pv. phaseolicola (strain 1448A / Race 6) (Pseudomonas syringae pv. phaseolicola (strain 1448A / Race 6)).